The following is a 476-amino-acid chain: Cysteine--tRNA ligase (476 aa).

Cysteine 29 provides a ligand contact to Zn(2+). The short motif at 31-41 (PTVYDYPHLGH) is the 'HIGH' region element. Zn(2+) contacts are provided by cysteine 209, histidine 234, and glutamate 238. A 'KMSKS' region motif is present at residues 266–270 (KMSKS). Lysine 269 is an ATP binding site.

Belongs to the class-I aminoacyl-tRNA synthetase family. Requires Zn(2+) as cofactor.

The protein resides in the cytoplasm. It carries out the reaction tRNA(Cys) + L-cysteine + ATP = L-cysteinyl-tRNA(Cys) + AMP + diphosphate. The protein is Cysteine--tRNA ligase of Thermococcus gammatolerans (strain DSM 15229 / JCM 11827 / EJ3).